Here is a 137-residue protein sequence, read N- to C-terminus: uncharacterized protein (137 aa).

Residues 1-10 (MISVDVPGHP) are compositionally biased toward low complexity. The tract at residues 1 to 23 (MISVDVPGHPGDAGGGGGGARKV) is disordered. Gly residues predominate over residues 11 to 20 (GDAGGGGGGA).

This is an uncharacterized protein from Human adenovirus C serotype 2 (HAdV-2).